The sequence spans 561 residues: Reductase FVEG_12641 (561 aa).

Residues 1–26 (MGVQSTANLPKETVSHLDTAPTPKPG) form a disordered region. Residues 52–189 (QQHDGPVFCS…ICKGDTISLL (138 aa)) form the MOSC domain. The 106-residue stretch at 237 to 342 (SAPKTYTLVD…PGSNPGAMEN (106 aa)) folds into the FAD-binding FR-type domain. FMN contacts are provided by residues 288 to 289 (FE), 305 to 307 (GVS), 313 to 316 (RGGS), and T362. In terms of domain architecture, 2Fe-2S ferredoxin-type spans 474-561 (FEVEVDEPDS…GIGRLRIEID (88 aa)). C512 is a [2Fe-2S] cluster binding site. An FMN-binding site is contributed by S514. Positions 517, 520, and 548 each coordinate [2Fe-2S] cluster.

The protein belongs to the PDR/VanB family. As to quaternary structure, monomer. FMN is required as a cofactor.

Reductase; part of the Fusarium detoxification of benzoxazolinone cluster 2 (FDB2) involved in the degradation of benzoxazolinones produced by the host plant. Maize, wheat, and rye produce the 2 benzoxazinone phytoanticipins 2,4-dihy-droxy-7-methoxy-1,4-benzoxazin-3-one (DIMBOA) and 2,4-dihydroxy-1,4-benzoxazin-3-one (DIBOA) that, due to their inherent instability once released, spontaneously degrade to the more stable corresponding benzoxazolinones, 6-methoxy-2-benzoxazolinone (MBOA) and 2-benzoxazolinone (BOA), respectively. The first step in the detoxification of benzoxazolinones involves the hydrolysis of the cyclic ester bond of benzoxazolinones by the FDB1 cluster gamma-lactamase MBL1 to aminophenols. MBL1 is able to convert BOA into 2-aminophenol (2-AP), as well as MBOA into 5-methoxy-2-aminophenol (2-AMP). The FDB2 cluster N-malonyltransferase FDB2/NAT1 then metabolizes aminophenols via N-malonylation to non-toxic malonamic acids. FDB2/NAT1 converts 2-AP into N-(2-hydroxyphenyl) malonamic acid (HPMA) and 2-AMP into N-(2-hydroxy-4-methoxyphenyl) malonamic acid (HMPMA). The duplicated dienlactone hydrolases DLH1 and DLH2 may provide redundant function for hydrolyzing the lactone moiety in the BOA molecule. The roles of the amidases an other enzymes encoded by the 2 FDB clusters have not been identified so far. The sequence is that of Reductase FVEG_12641 from Gibberella moniliformis (strain M3125 / FGSC 7600) (Maize ear and stalk rot fungus).